The following is a 78-amino-acid chain: Large ribosomal subunit protein bL28 (78 aa).

A disordered region spans residues 1–31; sequence MAAHCQVTGAEPGFGHSISHSHRRNKRRFDP.

Belongs to the bacterial ribosomal protein bL28 family.

This Arthrobacter sp. (strain FB24) protein is Large ribosomal subunit protein bL28.